Consider the following 279-residue polypeptide: Eukaryotic translation initiation factor 3 subunit G (279 aa).

Disordered stretches follow at residues 69–90 and 149–193; these read AKYG…QLGE and LNGG…EARD. Serine 77 is subject to Phosphoserine. The RRM domain maps to 196-275; that stretch reads TTLKVSQLNT…LILHLEWSKK (80 aa).

The protein belongs to the eIF-3 subunit G family. Component of the eukaryotic translation initiation factor 3 (eIF-3) complex.

The protein localises to the cytoplasm. In terms of biological role, RNA-binding component of the eukaryotic translation initiation factor 3 (eIF-3) complex, which is involved in protein synthesis of a specialized repertoire of mRNAs and, together with other initiation factors, stimulates binding of mRNA and methionyl-tRNAi to the 40S ribosome. The eIF-3 complex specifically targets and initiates translation of a subset of mRNAs involved in cell proliferation. This subunit can bind 18S rRNA. The sequence is that of Eukaryotic translation initiation factor 3 subunit G from Lodderomyces elongisporus (strain ATCC 11503 / CBS 2605 / JCM 1781 / NBRC 1676 / NRRL YB-4239) (Yeast).